Reading from the N-terminus, the 102-residue chain is snRNA-activating protein complex subunit 5 (102 aa).

A compositionally biased stretch (polar residues) spans 73–82 (QTTLKLSTRS). The tract at residues 73 to 102 (QTTLKLSTRSPMEEEEEEEEEEEEEEESDS) is disordered. The segment covering 85-102 (EEEEEEEEEEEEEEESDS) has biased composition (acidic residues).

In terms of assembly, part of the SNAPc complex composed of 5 subunits: SNAPC1, SNAPC2, SNAPC3, SNAPC4 and SNAPC5. SNAPC5 interacts with SNAPC4.

The protein resides in the nucleus. Its function is as follows. Part of the SNAPc complex required for the transcription of both RNA polymerase II and III small-nuclear RNA genes. Binds to the proximal sequence element (PSE), a non-TATA-box basal promoter element common to these 2 types of genes. Recruits TBP and BRF2 to the U6 snRNA TATA box. This is snRNA-activating protein complex subunit 5 from Mus musculus (Mouse).